The primary structure comprises 441 residues: Transcription factor bHLH90 (441 aa).

Positions 260–309 (NFKSKNLHSERKRRERINQAMYGLRAVVPKITKLNKIGIFSDAVDYINEL) constitute a bHLH domain.

In terms of assembly, homodimer. In terms of tissue distribution, expressed constitutively in roots, leaves, stems, and flowers.

The protein resides in the nucleus. The chain is Transcription factor bHLH90 (BHLH90) from Arabidopsis thaliana (Mouse-ear cress).